A 410-amino-acid chain; its full sequence is Probable 2,3-bisphosphoglycerate-independent phosphoglycerate mutase (410 aa).

The protein belongs to the BPG-independent phosphoglycerate mutase family. A-PGAM subfamily.

The enzyme catalyses (2R)-2-phosphoglycerate = (2R)-3-phosphoglycerate. It functions in the pathway carbohydrate degradation; glycolysis; pyruvate from D-glyceraldehyde 3-phosphate: step 3/5. In terms of biological role, catalyzes the interconversion of 2-phosphoglycerate and 3-phosphoglycerate. This Deinococcus radiodurans (strain ATCC 13939 / DSM 20539 / JCM 16871 / CCUG 27074 / LMG 4051 / NBRC 15346 / NCIMB 9279 / VKM B-1422 / R1) protein is Probable 2,3-bisphosphoglycerate-independent phosphoglycerate mutase.